A 313-amino-acid polypeptide reads, in one-letter code: Formate-nitrite transporter (313 aa).

Residues 1–47 (MPKSNTKYVIDPLSVKTSCSSEESYIRCVEYGKSKAHYSSLILLAKA) lie on the Cytoplasmic side of the membrane. The chain crosses the membrane as a helical span at residues 48–68 (ILAGVFVGVCAHASGIAGGLF). Topologically, residues 69 to 77 (YYHKLREYV) are extracellular. A helical transmembrane segment spans residues 78–98 (GASMSAFVYGFTFPIAFLCII). Residues 99-128 (CTGSDLFTGNTLAVTTALLHGKVSCLEYVR) are Cytoplasmic-facing. A helical transmembrane segment spans residues 129–149 (VMCISLFGNYVGAVSFAFFVS). Residues 150–185 (YGSGAFHKKEQVDKNHIFQFLNDIAVKKVNHTFVEC) lie on the Extracellular side of the membrane. Asparagine 179 carries an N-linked (GlcNAc...) asparagine glycan. The chain crosses the membrane as a helical span at residues 186–206 (ICLAIGCNIFVCLAVYFVLSI). Residues 207–211 (KDGSG) lie on the Cytoplasmic side of the membrane. Residues 212–232 (MVFSVFFAVYAFAIAGYEHII) traverse the membrane as a helical segment. Residues 233–260 (ANIYTLNISLMIDTEVSFTQVYFKNLLP) are Extracellular-facing. Residue asparagine 239 is glycosylated (N-linked (GlcNAc...) asparagine). The chain crosses the membrane as a helical span at residues 261 to 281 (TLIGNYIAGALVLACPLFFIY). The Cytoplasmic portion of the chain corresponds to 282–313 (RSYYINYEKMNEPSGGSLRSISIEMKNDGGAT).

It belongs to the FNT transporter (TC 1.A.16) family. Homopentamer.

The protein localises to the cell membrane. It localises to the vacuole membrane. The enzyme catalyses (S)-lactate(in) + H(+)(in) = (S)-lactate(out) + H(+)(out). The catalysed reaction is formate(in) + H(+)(in) = formate(out) + H(+)(out). It catalyses the reaction pyruvate(out) + H(+)(out) = pyruvate(in) + H(+)(in). It carries out the reaction acetate(out) + H(+)(out) = acetate(in) + H(+)(in). Its activity is regulated as follows. Inhibited by the Malaria Box compound MMV007839 and its derivatives BH296 and BH267.meta. In terms of biological role, monocarboxylate-proton symporter that mediates the efflux of the waste product lactate in the intraerythrocytic parasites; active in acidic-to-neutral pH range. Transports L-lactate. This is Formate-nitrite transporter from Plasmodium ovale.